Here is a 338-residue protein sequence, read N- to C-terminus: Fructose-1,6-bisphosphatase 1 (338 aa).

Position 2 is an N-acetylalanine (A2). Residues 18–22 (VMEQG) and 28–32 (TGELT) each bind AMP. Residues D69 and E98 each contribute to the Mg(2+) site. 113-114 (KY) contacts AMP. Positions 119, 121, and 122 each coordinate Mg(2+). Residue 122–125 (DGSS) coordinates substrate. An AMP-binding site is contributed by R141. N6-succinyllysine is present on K151. Substrate contacts are provided by residues 213–216 (NEGY), 244–249 (RYVGSM), Y265, and 275–277 (KLR). Y216, Y245, and Y265 each carry phosphotyrosine. E281 contributes to the Mg(2+) binding site.

The protein belongs to the FBPase class 1 family. In terms of assembly, homotetramer. It depends on Mg(2+) as a cofactor. Detected in pancreatic beta-cell lines MIN6 and beta-TC and in liver (at protein level). Preferentially expressed in liver, with lower levels detected in pancreatic islets and intestine, and very low levels in blood, muscle, brain and spleen.

The catalysed reaction is beta-D-fructose 1,6-bisphosphate + H2O = beta-D-fructose 6-phosphate + phosphate. The protein operates within carbohydrate biosynthesis; gluconeogenesis. With respect to regulation, subject to complex allosteric regulation. The enzyme can assume an active R-state, or an inactive T-state. Intermediate conformations may exist. AMP acts as an allosteric inhibitor. AMP binding affects the turnover of bound substrate and not the affinity for substrate. Fructose 2,6-bisphosphate acts as a competitive inhibitor. Fructose 2,6-bisphosphate and AMP have synergistic effects. Its function is as follows. Catalyzes the hydrolysis of fructose 1,6-bisphosphate to fructose 6-phosphate in the presence of divalent cations, acting as a rate-limiting enzyme in gluconeogenesis. Plays a role in regulating glucose sensing and insulin secretion of pancreatic beta-cells. Appears to modulate glycerol gluconeogenesis in liver. Important regulator of appetite and adiposity; increased expression of the protein in liver after nutrient excess increases circulating satiety hormones and reduces appetite-stimulating neuropeptides and thus seems to provide a feedback mechanism to limit weight gain. The polypeptide is Fructose-1,6-bisphosphatase 1 (Fbp1) (Mus musculus (Mouse)).